An 815-amino-acid chain; its full sequence is uncharacterized protein (815 aa).

Disordered regions lie at residues 123–183 (QSNT…QPST), 249–274 (NVNNNKNNKNQNNNNNNNIENSNNTN), 592–668 (IKQN…NLNS), and 765–815 (NNEE…EEIK). Polar residues-rich tracts occupy residues 135-154 (SIITNSDSPRLIVSDTTSTT) and 174-183 (DSITVLQPST). The span at 595–611 (NGSSSSNNNSKLSSTNS) shows a compositional bias: low complexity. Residues 612–639 (GQTSDNPINSSNGGQSIKKQGSNLSLNR) show a composition bias toward polar residues. Residues 640–668 (QQSSTKLNNQSNNNNNNNANTTNQNNLNS) are compositionally biased toward low complexity. Basic and acidic residues predominate over residues 765 to 782 (NNEEHNNNNKENNNENNK). The span at 783-809 (ENINNNNNIINNNNDNNCNENNNNCNE) shows a compositional bias: low complexity.

This is an uncharacterized protein from Dictyostelium discoideum (Social amoeba).